The primary structure comprises 452 residues: SAGA complex/transcription factor TFIID complex subunit Taf6 (452 aa).

Positions Thr-4–Arg-68 constitute a Histone-fold domain.

Belongs to the TAF6 family. As to quaternary structure, component of the 1.8 MDa SAGA (Spt-Ada-Gcn5 acetyltransferase) complex, which is composed of 19 subunits tra1, spt7, taf5, ngg1/ada3, sgf73, spt20, spt8, taf12, taf6, hfi1/ada1, ubp8, gcn5, ada2, spt3, sgf29, taf10, taf9, sgf11 and sus1. The SAGA complex is composed of 4 modules, namely the HAT (histone acetyltransferase) module (gcn5, ada2, ngg1/ada3 and sgf29), the DUB (deubiquitinating) module (ubp8, sgf11, sgf73 and sus1), the core or TAF (TBP-associated factor) module (taf5, taf6, taf9, taf10 and taf12), and the Tra1 or SPT (Suppressor of Ty) module (tra1, hfi1/ada1, spt3, spt7, spt8 and spt20). The Tra1/SPT module binds activators, the core module recruits TBP (TATA-binding protein), the HAT module contains the histone H3 acetyltransferase gcn5, and the DUB module comprises the histone H2B deubiquitinase ubp8. Interacts with gcn5, taf5 and taf73. Component of the 1.2 MDa TFIID complex, which is composed of TATA-binding protein (TBP) and the 14 TBP-associated factors (TAFs). It comprises 1 copy of each taf1, taf2, taf3, taf7, taf8, taf11, taf13, 2 copies of each taf4, taf5, taf6, taf9, taf10, taf12, and 3 copies of taf14. In TFIID, taf6 heterodimerizes with taf9, forming ultimately an octamer consisting of a taf6-taf9 heterotetramer core flanked by taf4-taf12 dimers on either side, similar to the histone H2A-H2B-H3-H4 octamer.

The protein resides in the nucleus. Functions as a component of both the DNA-binding general transcription initiation factor complex TFIID and the transcription coactivator SAGA complex. Binding of TFIID to a promoter (with or without TATA element) is the initial step in pre-initiation complex (PIC) formation. TFIID plays a key role in the regulation of gene expression by RNA polymerase II through different activities such as transcription activator interaction, core promoter recognition and selectivity, TFIIA and TFIIB interaction, chromatin modification (histone acetylation by TAF1), facilitation of DNA opening and initiation of transcription. SAGA acts as a general cofactor required for essentially all RNA polymerase II transcription. At the promoters, SAGA is required for transcription pre-initiation complex (PIC) recruitment. It influences RNA polymerase II transcriptional activity through different activities such as TBP interaction (via core/TAF module) and promoter selectivity, interaction with transcription activators (via Tra1/SPT module), and chromatin modification through histone acetylation (via HAT module) and deubiquitination (via DUB module). SAGA preferentially acetylates histones H3 (to form H3K9ac, H3K14ac, H3K18ac and H3K23ac) and H2B and deubiquitinates histone H2B. SAGA interacts with DNA via upstream activating sequences (UASs). In Schizosaccharomyces pombe (strain 972 / ATCC 24843) (Fission yeast), this protein is SAGA complex/transcription factor TFIID complex subunit Taf6.